The primary structure comprises 601 residues: Elongation factor 4 (601 aa).

The tr-type G domain occupies 6-188; that stretch reads NYIRNFSIVA…AIVRQLPPPH (183 aa). Residues 18-23 and 135-138 each bind GTP; these read DHGKST and NKVD.

This sequence belongs to the TRAFAC class translation factor GTPase superfamily. Classic translation factor GTPase family. LepA subfamily.

Its subcellular location is the cell inner membrane. It catalyses the reaction GTP + H2O = GDP + phosphate + H(+). Required for accurate and efficient protein synthesis under certain stress conditions. May act as a fidelity factor of the translation reaction, by catalyzing a one-codon backward translocation of tRNAs on improperly translocated ribosomes. Back-translocation proceeds from a post-translocation (POST) complex to a pre-translocation (PRE) complex, thus giving elongation factor G a second chance to translocate the tRNAs correctly. Binds to ribosomes in a GTP-dependent manner. In Bartonella quintana (strain Toulouse) (Rochalimaea quintana), this protein is Elongation factor 4.